A 244-amino-acid polypeptide reads, in one-letter code: tRNA pseudouridine synthase A (244 aa).

Aspartate 52 acts as the Nucleophile in catalysis. Position 110 (tyrosine 110) interacts with substrate.

This sequence belongs to the tRNA pseudouridine synthase TruA family. Homodimer.

It catalyses the reaction uridine(38/39/40) in tRNA = pseudouridine(38/39/40) in tRNA. Formation of pseudouridine at positions 38, 39 and 40 in the anticodon stem and loop of transfer RNAs. The polypeptide is tRNA pseudouridine synthase A (Clostridium acetobutylicum (strain ATCC 824 / DSM 792 / JCM 1419 / IAM 19013 / LMG 5710 / NBRC 13948 / NRRL B-527 / VKM B-1787 / 2291 / W)).